Here is a 205-residue protein sequence, read N- to C-terminus: Small ribosomal subunit protein uS5 (205 aa).

An S5 DRBM domain is found at 49 to 112 (LVDEVLDINM…VSAKINLVKV (64 aa)).

Belongs to the universal ribosomal protein uS5 family. In terms of assembly, part of the 30S ribosomal subunit. Contacts protein S4.

Its function is as follows. With S4 and S12 plays an important role in translational accuracy. The sequence is that of Small ribosomal subunit protein uS5 from Methanospirillum hungatei JF-1 (strain ATCC 27890 / DSM 864 / NBRC 100397 / JF-1).